The sequence spans 218 residues: MFGSKTLFSWAAKRSKDFYRKKSKIDNFRSRAAYKLIELNSKYRFINKEDVVIDVGFAPGSWSQVAKKLVGNKGKVIGIDIQHIAPPEGVLPIYGDIRDPNTLTKLFEALRLLHEPNTNDSIDCRVVDAVISDMLHKATGIRIRDHALSMELCASALHVALTFLKSNGSFICKFYMGDEDADLQNLLKSHFRFVQVMKPKASLKESREAYFVCLERKP.

S-adenosyl-L-methionine-binding positions include Pro-59–Trp-62, Asp-80, Asp-96–Ile-97, and Asp-133. Residue Lys-173 is the Proton acceptor of the active site.

Belongs to the class I-like SAM-binding methyltransferase superfamily. RNA methyltransferase RlmE family.

It localises to the mitochondrion. It catalyses the reaction a uridine in 21S rRNA + S-adenosyl-L-methionine = a 2'-O-methyluridine in 21S rRNA + S-adenosyl-L-homocysteine + H(+). Functionally, S-adenosyl-L-methionine-dependent 2'-O-ribose methyltransferase that catalyzes the formation of the 2'-O-methyluridine corresponding to position 2791 in S.cerevisiae 21S mitochondrial large subunit ribosomal RNA (mtLSU rRNA), a universally conserved modification in the peptidyl transferase domain of the mtLSU rRNA. In Schizosaccharomyces pombe (strain 972 / ATCC 24843) (Fission yeast), this protein is rRNA methyltransferase 2, mitochondrial.